The chain runs to 376 residues: Pre-mRNA-splicing factor cwf25 (376 aa).

The stretch at 25–60 (KDEQAHKEEMKRVEQLRREIEEERQLLELHRLQEAA) forms a coiled coil. Disordered regions lie at residues 153 to 211 (LMEK…DRNN) and 258 to 289 (RTSR…ITQR). Positions 154–167 (MEKRKYSLDSDRKS) are enriched in basic and acidic residues. The span at 168–178 (KERRHRDRHHR) shows a compositional bias: basic residues. A compositionally biased stretch (basic and acidic residues) spans 179–199 (SNQDRSRERSDNEQHSSDKRE). 2 positions are modified to phosphoserine: serine 266 and serine 268. Residues 286–334 (ITQRHTDIESRLQKMQDNAKELDESRRKKIELLEKKERDEEQFLEKERR) are a coiled coil.

It belongs to the CWC25 family. Belongs to the 40S cdc5-associated complex (or cwf complex), a spliceosome sub-complex reminiscent of a late-stage spliceosome composed of the U2, U5 and U6 snRNAs and at least brr2, cdc5, cwf2/prp3, cwf3/syf1, cwf4/syf3, cwf5/ecm2, spp42/cwf6, cwf7/spf27, cwf8, cwf9, cwf10, cwf11, cwf12, prp45/cwf13, cwf14, cwf15, cwf16, cwf17, cwf18, cwf19, cwf20, cwf21, cwf22, cwf23, cwf24, cwf25, cwf26, cyp7/cwf27, cwf28, cwf29/ist3, lea1, msl1, prp5/cwf1, prp10, prp12/sap130, prp17, prp22, sap61, sap62, sap114, sap145, slu7, smb1, smd1, smd3, smf1, smg1 and syf2.

Its subcellular location is the nucleus. Its function is as follows. Involved in mRNA splicing. The sequence is that of Pre-mRNA-splicing factor cwf25 (cwf25) from Schizosaccharomyces pombe (strain 972 / ATCC 24843) (Fission yeast).